A 130-amino-acid chain; its full sequence is Phosphomevalonate dehydratase small subunit (130 aa).

Residue Ser62 is the Proton acceptor of the active site.

This sequence belongs to the AcnX type II small subunit family. Heterodimer composed of a large subunit (PMDh-L) and a small subunit (PMDh-S).

It catalyses the reaction (R)-5-phosphomevalonate = (2E)-3-methyl-5-phosphooxypent-2-enoate + H2O. It participates in isoprenoid biosynthesis; isopentenyl diphosphate biosynthesis via mevalonate pathway. Component of a hydro-lyase that catalyzes the dehydration of mevalonate 5-phosphate (MVA5P) to form trans-anhydromevalonate 5-phosphate (tAHMP). Involved in the archaeal mevalonate (MVA) pathway, which provides fundamental precursors for isoprenoid biosynthesis, such as isopentenyl diphosphate (IPP) and dimethylallyl diphosphate (DMAPP). The chain is Phosphomevalonate dehydratase small subunit from Pyrococcus abyssi (strain GE5 / Orsay).